A 1130-amino-acid chain; its full sequence is Serine/threonine-protein kinase LATS1 (1130 aa).

Residues 1 to 11 show a composition bias toward basic and acidic residues; sequence MKRSEKPEGYR. The tract at residues 1 to 71 is disordered; it reads MKRSEKPEGY…PRQVRNPPKF (71 aa). The segment covering 19-30 has biased composition (polar residues); that stretch reads PASNYTVSSRQM. Over residues 46–64 the composition is skewed to basic and acidic residues; sequence DAAKAEHNMSKMSTEDPRQ. Residues 100–141 enclose the UBA domain; sequence EVNPQMLQDLQAAGFDEDMVIQALQKTNNRSIEAAIEFISKM. The disordered stretch occupies residues 149 to 276; sequence EQMAAAAARP…SWEPNSQTKR (128 aa). The span at 167 to 179 shows a compositional bias: polar residues; sequence NVQQSVNRKQSWK. A compositionally biased stretch (pro residues) spans 235-268; that stretch reads NPPPPPQVRSVTPPPPPRGQTPPPRGTTPPPPSW. Thr-246 is modified (phosphothreonine). Ser-278 bears the Phosphoserine mark. 4 disordered regions span residues 294 to 321, 365 to 405, 432 to 484, and 515 to 631; these read GAWQEGYPPPPLNTSPMNPPNQGQRGIS, AGTV…NGSI, NWPQ…PSAT, and THPS…ESRI. Over residues 300 to 312 the composition is skewed to pro residues; that stretch reads YPPPPLNTSPMNP. The PPxY motif 1 signature appears at 373–376; sequence PPPY. Polar residues predominate over residues 381-405; that stretch reads ANGQSPSALQTGGSAAPSSYTNGSI. A compositionally biased stretch (low complexity) spans 434–447; sequence PQSSSAPAQSSPSS. Residues 454 to 482 show a composition bias toward polar residues; that stretch reads WQPNIPVRSNSFNNPLGNRASHSANSQPS. Ser-464 bears the Phosphoserine; by NUAK1 and NUAK2 mark. The tract at residues 526–655 is interaction with YAP1; that stretch reads TVQPSPFPEG…HVENVLKSHQ (130 aa). A PPxY motif 2 motif is present at residues 556 to 559; it reads PPPY. Residues 579–609 show a composition bias toward basic and acidic residues; that stretch reads PSKEDQPSLPKEDESEKSYENVDSGDKEKKQ. Ser-613 bears the Phosphoserine mark. Basic and acidic residues predominate over residues 621 to 630; sequence KKDEERRESR. Residue Ser-674 is modified to Phosphoserine. The Protein kinase domain occupies 705–1010; that stretch reads FVKIKTLGIG…ADEIKAHPFF (306 aa). ATP-binding positions include 711–719 and Lys-734; that span reads LGIGAFGEV. The Proton acceptor role is filled by Asp-828. A Phosphoserine; by STK3/MST2 modification is found at Ser-909. In terms of domain architecture, AGC-kinase C-terminal spans 1011–1090; it reads KTIDFSSDLR…RRFFDDNGYP (80 aa). Thr-1079 is modified (phosphothreonine; by STK3/MST2). The disordered stretch occupies residues 1104 to 1130; it reads SQGSEQQSDEDDQNTGSEIKNRDLVYV.

It belongs to the protein kinase superfamily. AGC Ser/Thr protein kinase family. In terms of assembly, complexes with CDK1 in early mitosis. LATS1-associated CDK1 has no mitotic cyclin partner and no apparent kinase activity. Binds phosphorylated ZYX, locating this protein to the mitotic spindle and suggesting a role for actin regulatory proteins during mitosis. Binds to and colocalizes with LIMK1 at the actomyosin contractile ring during cytokinesis. Interacts (via PPxY motif 2) with YAP1 (via WW domains). Interacts with MOB1A and MOB1B. Interacts with LIMD1, WTIP and AJUBA. Interacts with ESR1, DCAF1 and DCAF13; probably recruits DCAF1 and DCAF13 to ESR1 to promote ESR1 ubiquitination and ubiquitin-mediated proteasomal degradation. Interacts with STK3/MST2; this interaction is inhibited in the presence of DLG5. Interacts with SCRIB in the presence of DLG5. Interacts with WWTR1/TAZ. Interacts with WWC1, WWC2 and WWC3 (via their WW domains). The cofactor is Mg(2+). Autophosphorylated and phosphorylated during M-phase of the cell cycle. Phosphorylated by STK3/MST2 at Ser-909 and Thr-1079, which results in its activation. Phosphorylated by MAP4Ks; in parallel to STK3/MST2 and resulting to its activation. Phosphorylation at Ser-464 by NUAK1 and NUAK2 leads to decreased protein level and is required to regulate cellular senescence and cellular ploidy. Expressed in all adult tissues examined except for lung and kidney.

It is found in the cytoplasm. Its subcellular location is the cytoskeleton. The protein localises to the microtubule organizing center. The protein resides in the centrosome. It localises to the spindle. It is found in the midbody. Its subcellular location is the spindle pole body. The catalysed reaction is L-seryl-[protein] + ATP = O-phospho-L-seryl-[protein] + ADP + H(+). It carries out the reaction L-threonyl-[protein] + ATP = O-phospho-L-threonyl-[protein] + ADP + H(+). Its function is as follows. Negative regulator of YAP1 in the Hippo signaling pathway that plays a pivotal role in organ size control and tumor suppression by restricting proliferation and promoting apoptosis. The core of this pathway is composed of a kinase cascade wherein STK3/MST2 and STK4/MST1, in complex with its regulatory protein SAV1, phosphorylates and activates LATS1/2 in complex with its regulatory protein MOB1, which in turn phosphorylates and inactivates YAP1 oncoprotein and WWTR1/TAZ. Phosphorylation of YAP1 by LATS1 inhibits its translocation into the nucleus to regulate cellular genes important for cell proliferation, cell death, and cell migration. Acts as a tumor suppressor which plays a critical role in maintenance of ploidy through its actions in both mitotic progression and the G1 tetraploidy checkpoint. Negatively regulates G2/M transition by down-regulating CDK1 kinase activity. Involved in the control of p53 expression. Affects cytokinesis by regulating actin polymerization through negative modulation of LIMK1. May also play a role in endocrine function. Plays a role in mammary gland epithelial cell differentiation, both through the Hippo signaling pathway and the intracellular estrogen receptor signaling pathway by promoting the degradation of ESR1. Acts as an activator of the NLRP3 inflammasome by mediating phosphorylation of 'Ser-265' of NLRP3 following NLRP3 palmitoylation, promoting NLRP3 activation by NEK7. This Homo sapiens (Human) protein is Serine/threonine-protein kinase LATS1.